The sequence spans 393 residues: NAD(P)H-quinone oxidoreductase subunit H, chloroplastic (393 aa).

Belongs to the complex I 49 kDa subunit family. As to quaternary structure, NDH is composed of at least 16 different subunits, 5 of which are encoded in the nucleus.

It is found in the plastid. The protein localises to the chloroplast thylakoid membrane. It catalyses the reaction a plastoquinone + NADH + (n+1) H(+)(in) = a plastoquinol + NAD(+) + n H(+)(out). The enzyme catalyses a plastoquinone + NADPH + (n+1) H(+)(in) = a plastoquinol + NADP(+) + n H(+)(out). Its function is as follows. NDH shuttles electrons from NAD(P)H:plastoquinone, via FMN and iron-sulfur (Fe-S) centers, to quinones in the photosynthetic chain and possibly in a chloroplast respiratory chain. The immediate electron acceptor for the enzyme in this species is believed to be plastoquinone. Couples the redox reaction to proton translocation, and thus conserves the redox energy in a proton gradient. The polypeptide is NAD(P)H-quinone oxidoreductase subunit H, chloroplastic (Acorus calamus var. americanus (American sweet flag)).